Reading from the N-terminus, the 310-residue chain is Tagatose-6-phosphate kinase (310 aa).

It belongs to the carbohydrate kinase PfkB family. LacC subfamily.

The catalysed reaction is D-tagatofuranose 6-phosphate + ATP = D-tagatofuranose 1,6-bisphosphate + ADP + H(+). Its pathway is carbohydrate metabolism; D-tagatose 6-phosphate degradation; D-glyceraldehyde 3-phosphate and glycerone phosphate from D-tagatose 6-phosphate: step 1/2. This is Tagatose-6-phosphate kinase from Streptococcus agalactiae serotype V (strain ATCC BAA-611 / 2603 V/R).